A 276-amino-acid polypeptide reads, in one-letter code: ATP synthase subunit a (276 aa).

6 helical membrane-spanning segments follow: residues 47 to 67, 107 to 127, 152 to 172, 188 to 208, 226 to 246, and 247 to 267; these read WHIDSLLFSVGLGVLFLWLFY, IAPLGLTIFVWVFLMNLMDLI, DLNVTLGLALSVFVLIVFYSI, PFNHWALIPINFVLETVTLIA, LIFILIALMPWWAQFALSVPW, and AIFHILVIVLQAFIFMMLTIV.

This sequence belongs to the ATPase A chain family. F-type ATPases have 2 components, CF(1) - the catalytic core - and CF(0) - the membrane proton channel. CF(1) has five subunits: alpha(3), beta(3), gamma(1), delta(1), epsilon(1). CF(0) has three main subunits: a(1), b(2) and c(9-12). The alpha and beta chains form an alternating ring which encloses part of the gamma chain. CF(1) is attached to CF(0) by a central stalk formed by the gamma and epsilon chains, while a peripheral stalk is formed by the delta and b chains.

Its subcellular location is the cell inner membrane. Functionally, key component of the proton channel; it plays a direct role in the translocation of protons across the membrane. The polypeptide is ATP synthase subunit a (Shewanella halifaxensis (strain HAW-EB4)).